Reading from the N-terminus, the 83-residue chain is Small ribosomal subunit protein bS20 (83 aa).

It belongs to the bacterial ribosomal protein bS20 family.

Functionally, binds directly to 16S ribosomal RNA. This is Small ribosomal subunit protein bS20 from Staphylococcus carnosus (strain TM300).